The sequence spans 58 residues: Large ribosomal subunit protein bL32 (58 aa).

The protein belongs to the bacterial ribosomal protein bL32 family.

The protein is Large ribosomal subunit protein bL32 of Limosilactobacillus fermentum (strain NBRC 3956 / LMG 18251) (Lactobacillus fermentum).